Here is a 368-residue protein sequence, read N- to C-terminus: MITLEVDLGERSYPIHIGTGLLDNAELLRPHVRGQHAVIVTNETVGPLYAARVEAALAALGKTVRTVTLPDGEAFKHWETLNRIFDALLQAGADRKTTLVALGGGVVGDMTGFAAACYMRGVPFIQMPTTLLAQVDSSVGGKTGINHPLGKNMIGAFHQPNAVIADIDTLRTLPARELAAGMAEVIKHGAIADAEYFGWIERNIKPLNACDPDLMALAVQRSCEIKAGVVAQDEREGGLRAILNFGHTFGHAIEAGMGYGAWLHGEAVGCGMVMAADLSHRLGFIDTETRARIRELTQAANLPVVAPELGADRYIELMKVDKKAEAGSIKFILLKQLGEAFITTVPDADLRATLAHAVLKPPTEAPVA.

Residues 71–76 (DGEAFK), 105–109 (GVVGD), 129–130 (TT), lysine 142, lysine 151, and 169–172 (TLRT) each bind NAD(+). 3 residues coordinate Zn(2+): glutamate 184, histidine 247, and histidine 264.

Belongs to the sugar phosphate cyclases superfamily. Dehydroquinate synthase family. It depends on Co(2+) as a cofactor. The cofactor is Zn(2+). NAD(+) is required as a cofactor.

The protein resides in the cytoplasm. The catalysed reaction is 7-phospho-2-dehydro-3-deoxy-D-arabino-heptonate = 3-dehydroquinate + phosphate. It participates in metabolic intermediate biosynthesis; chorismate biosynthesis; chorismate from D-erythrose 4-phosphate and phosphoenolpyruvate: step 2/7. Catalyzes the conversion of 3-deoxy-D-arabino-heptulosonate 7-phosphate (DAHP) to dehydroquinate (DHQ). The protein is 3-dehydroquinate synthase of Cupriavidus necator (strain ATCC 17699 / DSM 428 / KCTC 22496 / NCIMB 10442 / H16 / Stanier 337) (Ralstonia eutropha).